Here is a 254-residue protein sequence, read N- to C-terminus: 5'-nucleotidase SurE (254 aa).

Asp-8, Asp-9, Ser-38, and Asn-91 together coordinate a divalent metal cation.

This sequence belongs to the SurE nucleotidase family. A divalent metal cation is required as a cofactor.

The protein localises to the cytoplasm. It carries out the reaction a ribonucleoside 5'-phosphate + H2O = a ribonucleoside + phosphate. Functionally, nucleotidase that shows phosphatase activity on nucleoside 5'-monophosphates. This chain is 5'-nucleotidase SurE, found in Anaeromyxobacter dehalogenans (strain 2CP-C).